The chain runs to 87 residues: DNA polymerase epsilon subunit C (87 aa).

As to quaternary structure, DNA polymerase epsilon is a heterotetramer consisting of cdc20/Pol2, dpb2, dpb3, and dpb4. Also forms a heterodimer consisting dpb3 and dpb4. Interacts directly with cdc20/pol2 and dpb4.

It is found in the nucleus. As accessory component of the DNA polymerase epsilon (DNA polymerase II) participates in chromosomal DNA replication. It is required during synthesis of the leading and lagging DNA strands at the replication fork and binds at/or near replication origins and moves along DNA with the replication fork. It has 3'-5' proofreading exonuclease activity that correct errors arising during DNA replication. It is also involved in DNA synthesis during DNA repair. The dpb3-dpb4 dimer associates with histone deacetylases, chromatin remodelers, and histones and plays a crucial role in the inheritance of histone hypoacetylation and H3K9 methylation in heterochromatin. The dpb3-dpb4 dimer is also required for the recruitment of sir2 to heterochromatin. The chain is DNA polymerase epsilon subunit C from Schizosaccharomyces pombe (strain 972 / ATCC 24843) (Fission yeast).